The primary structure comprises 119 residues: Large ribosomal subunit protein bL20 (119 aa).

The protein belongs to the bacterial ribosomal protein bL20 family.

In terms of biological role, binds directly to 23S ribosomal RNA and is necessary for the in vitro assembly process of the 50S ribosomal subunit. It is not involved in the protein synthesizing functions of that subunit. This is Large ribosomal subunit protein bL20 from Clostridium acetobutylicum (strain ATCC 824 / DSM 792 / JCM 1419 / IAM 19013 / LMG 5710 / NBRC 13948 / NRRL B-527 / VKM B-1787 / 2291 / W).